Reading from the N-terminus, the 354-residue chain is WASH complex subunit 3 (354 aa).

The segment at 76–354 (SSANVPVHNT…DDDDDDDESW (279 aa)) is disordered. Residues 107 to 143 (IPPPPPPPPPPMTGVPPPPPPPPPPPISKSNIPPPPA) are compositionally biased toward pro residues. Positions 150-159 (ESDDDDEDNN) are enriched in acidic residues. Residues 213-244 (PQPPQPQPQSPSPQPPPPPTTTSSIPVPPPPF) are compositionally biased toward pro residues. Residues 251–260 (SDDDDDDDEG) show a composition bias toward acidic residues. Over residues 277-290 (NNNSNSNSYSNNNN) the composition is skewed to low complexity. 2 stretches are compositionally biased toward acidic residues: residues 293 to 307 (DDDD…DDDN) and 342 to 354 (DADD…DESW).

The protein belongs to the CCDC53 family. In terms of assembly, probable component of the WASH complex.

This is WASH complex subunit 3 from Dictyostelium discoideum (Social amoeba).